The primary structure comprises 103 residues: Pterin-4-alpha-carbinolamine dehydratase 2 (103 aa).

Belongs to the pterin-4-alpha-carbinolamine dehydratase family. As to expression, highest level found in the kidney, liver, heart and ovarian follicles.

It catalyses the reaction (4aS,6R)-4a-hydroxy-L-erythro-5,6,7,8-tetrahydrobiopterin = (6R)-L-erythro-6,7-dihydrobiopterin + H2O. In terms of biological role, involved in tetrahydrobiopterin biosynthesis. Seems to both prevent the formation of 7-pterins and accelerate the formation of quinonoid-BH2. Functionally, regulates the dimerization of homeodomain protein HNF-1-alpha and enhances its transcriptional activity. The protein is Pterin-4-alpha-carbinolamine dehydratase 2 (PCBD2) of Gallus gallus (Chicken).